A 365-amino-acid polypeptide reads, in one-letter code: Dual-specificity RNA methyltransferase RlmN (365 aa).

Glu91 functions as the Proton acceptor in the catalytic mechanism. Positions 97–337 constitute a Radical SAM core domain; it reads ETSRGTLCIS…TTVRKTRGDD (241 aa). Cys104 and Cys342 are disulfide-bonded. Cys111, Cys115, and Cys118 together coordinate [4Fe-4S] cluster. Residues 168–169, Ser200, 222–224, and Asn299 contribute to the S-adenosyl-L-methionine site; these read GE and SLH. Cys342 (S-methylcysteine intermediate) is an active-site residue.

It belongs to the radical SAM superfamily. RlmN family. [4Fe-4S] cluster is required as a cofactor.

The protein localises to the cytoplasm. It catalyses the reaction adenosine(2503) in 23S rRNA + 2 reduced [2Fe-2S]-[ferredoxin] + 2 S-adenosyl-L-methionine = 2-methyladenosine(2503) in 23S rRNA + 5'-deoxyadenosine + L-methionine + 2 oxidized [2Fe-2S]-[ferredoxin] + S-adenosyl-L-homocysteine. The enzyme catalyses adenosine(37) in tRNA + 2 reduced [2Fe-2S]-[ferredoxin] + 2 S-adenosyl-L-methionine = 2-methyladenosine(37) in tRNA + 5'-deoxyadenosine + L-methionine + 2 oxidized [2Fe-2S]-[ferredoxin] + S-adenosyl-L-homocysteine. Specifically methylates position 2 of adenine 2503 in 23S rRNA and position 2 of adenine 37 in tRNAs. m2A2503 modification seems to play a crucial role in the proofreading step occurring at the peptidyl transferase center and thus would serve to optimize ribosomal fidelity. The protein is Dual-specificity RNA methyltransferase RlmN of Nitrosospira multiformis (strain ATCC 25196 / NCIMB 11849 / C 71).